The primary structure comprises 824 residues: Lysine-specific histone demethylase 1B homolog (824 aa).

Residues methionine 1–valine 31 are disordered. Residues proline 245–proline 346 form the SWIRM domain. Residues proline 352–isoleucine 407, valine 579, glutamate 788, and glutamine 796–methionine 798 contribute to the FAD site.

The protein belongs to the flavin monoamine oxidase family. It depends on FAD as a cofactor. In terms of tissue distribution, in hermaphrodites, expressed in gut cells, embryonic cells and sheath cells. Not expressed in sperm or pharyngeal neurons.

The protein resides in the nucleus. The catalysed reaction is N(6),N(6)-dimethyl-L-lysyl(4)-[histone H3] + 2 A + 2 H2O = L-lysyl(4)-[histone H3] + 2 formaldehyde + 2 AH2. Functionally, histone demethylase that demethylates di-methylated 'Lys-4' of histone H3, a specific tag for epigenetic transcriptional activation, thereby acting as a corepressor. Acts by oxidizing the substrate by FAD to generate the corresponding imine that is subsequently hydrolyzed. Plays a role in the mitotic development of the germline. May be involved in H3 demethylation in mitotic cells including gut and embryonic cells. Plays a role in sensitivity upon interstrand cross-link DNA damage, probably by positively regulating the expression of mlh-1. Plays a role in developmental growth and lifespan regulation in response to ultraviolet-induced damage. No obvious role in larval development, sex chromosome segregation or for regulating meiotic crossover frequency. The sequence is that of Lysine-specific histone demethylase 1B homolog from Caenorhabditis elegans.